Reading from the N-terminus, the 232-residue chain is MPESADPRDRLIVALDLPDVAAAERLVARIGDAATFYKIGYRLAYAGGLDFAARLAREGKKTFLDLKLHDIGNTVEEGVRSASALGATFLTVHAYPQTMRAAVRGRGPGLKILAVTVLTSYDDADAAEAGYALPVADLVAQRASQAAAIGIDGIVCAAAEAGAVRGRIGPSGLIVTPGIRPAGAEAGDQKRVMTPGQARAAGIDHVVVGRPITGAGDPRAVARTIVAEMENV.

Residues D16, K38, 65-74 (DLKLHDIGNT), T119, R180, Q189, G209, and R210 contribute to the substrate site. Residue K67 is the Proton donor of the active site.

This sequence belongs to the OMP decarboxylase family. Type 1 subfamily. In terms of assembly, homodimer.

The enzyme catalyses orotidine 5'-phosphate + H(+) = UMP + CO2. It functions in the pathway pyrimidine metabolism; UMP biosynthesis via de novo pathway; UMP from orotate: step 2/2. Functionally, catalyzes the decarboxylation of orotidine 5'-monophosphate (OMP) to uridine 5'-monophosphate (UMP). The protein is Orotidine 5'-phosphate decarboxylase of Methylorubrum populi (strain ATCC BAA-705 / NCIMB 13946 / BJ001) (Methylobacterium populi).